The primary structure comprises 270 residues: Cystinosin homolog (270 aa).

The region spanning 9–75 is the PQ-loop 1 domain; it reads LEISYEIVGW…LYFSPVIQKQ (67 aa). The helical transmembrane segment at 14 to 34 threads the bilayer; it reads EIVGWIAFASWSISFYPQLIL. Asn52 is a glycosylation site (N-linked (GlcNAc...) asparagine). 3 helical membrane-spanning segments follow: residues 93–113, 123–143, and 148–168; these read VAFS…IFIY, LAIG…FIAL, and WLWL…VKYI. In terms of domain architecture, PQ-loop 2 spans 151–213; it reads LISIFNSIQV…IQSIDQNSWK (63 aa). Asn174 is a glycosylation site (N-linked (GlcNAc...) asparagine). A run of 2 helical transmembrane segments spans residues 180 to 200 and 223 to 243; these read TVGW…ANYL and LLSL…YVLY. The disordered stretch occupies residues 250 to 270; that stretch reads KSPETGEESNEPLIDSSHEHV.

The protein belongs to the cystinosin (TC 2.A.43.1) family.

The protein resides in the lysosome membrane. Functionally, thought to transport cystine out of lysosomes. The polypeptide is Cystinosin homolog (Arabidopsis thaliana (Mouse-ear cress)).